Reading from the N-terminus, the 674-residue chain is Ribosome biogenesis protein BOP1 homolog (674 aa).

The disordered stretch occupies residues 1–28 (MASTSAATPLKNKRKFENGKKKPKTLKD). Positions 15–28 (KFENGKKKPKTLKD) are enriched in basic and acidic residues. WD repeat units lie at residues 342–384 (GHTG…KTFQ), 386–425 (DGEV…RLHV), 427–458 (QTEA…LMLK), 459–500 (MPNE…SQCP), 503–541 (KRKG…LVKK), 587–626 (HHTA…DFVK), and 643–674 (PNDL…LFTY).

It belongs to the WD repeat BOP1/ERB1 family.

Its subcellular location is the nucleus. It localises to the nucleolus. The protein localises to the nucleoplasm. Its function is as follows. Required for maturation of ribosomal RNAs and formation of the large ribosomal subunit. The polypeptide is Ribosome biogenesis protein BOP1 homolog (Caenorhabditis elegans).